The primary structure comprises 290 residues: Ribosomal RNA small subunit methyltransferase A (290 aa).

S-adenosyl-L-methionine contacts are provided by Asn-27, Leu-29, Gly-54, Glu-75, Asp-100, and Asn-125.

The protein belongs to the class I-like SAM-binding methyltransferase superfamily. rRNA adenine N(6)-methyltransferase family. RsmA subfamily.

The protein resides in the cytoplasm. It catalyses the reaction adenosine(1518)/adenosine(1519) in 16S rRNA + 4 S-adenosyl-L-methionine = N(6)-dimethyladenosine(1518)/N(6)-dimethyladenosine(1519) in 16S rRNA + 4 S-adenosyl-L-homocysteine + 4 H(+). In terms of biological role, specifically dimethylates two adjacent adenosines (A1518 and A1519) in the loop of a conserved hairpin near the 3'-end of 16S rRNA in the 30S particle. May play a critical role in biogenesis of 30S subunits. The polypeptide is Ribosomal RNA small subunit methyltransferase A (Streptococcus pneumoniae (strain P1031)).